The primary structure comprises 132 residues: Global transcriptional regulator Spx (132 aa).

Residues C10 and C13 are joined by a disulfide bond.

This sequence belongs to the ArsC family. Spx subfamily. Interacts with the C-terminal domain of the alpha subunit of the RNAP.

The protein resides in the cytoplasm. Its function is as follows. Global transcriptional regulator that plays a key role in stress response and exerts either positive or negative regulation of genes. Acts by interacting with the C-terminal domain of the alpha subunit of the RNA polymerase (RNAP). This interaction can enhance binding of RNAP to the promoter region of target genes and stimulate their transcription, or block interaction of RNAP with activator. In Lactiplantibacillus plantarum (strain ATCC BAA-793 / NCIMB 8826 / WCFS1) (Lactobacillus plantarum), this protein is Global transcriptional regulator Spx.